We begin with the raw amino-acid sequence, 348 residues long: MGKDYYKILGIPSGANEDEIKKAYRKMALKYHPDKNKEPNAEEKFKEIAEAYDVLSDPKKRSLYDQYGEEGLKTGGGSSGGSGGSFHYTFHGDPHATFASFFGGSNPFDIFFASSRSTRPFSGFDPDDMDVDEDEDPFGAFGRFGFNGLSRGPRRAPEPLYPRRKVQDPPVVHELRVSLEEIYHGSTKRMKITRRRLNPDGRTVRTEDKILHIVIKRGWKEGTKITFPKEGDATPDNIPADIVFVLKDKPHAHFRRDGTNVLYSALISLKEALCGCTVNIPTIDGRVIPLPCNDVIKPGTVKRLRGEGLPFPKVPTQRGDLIVEFKVRFPDRLTPQTRQILKQHLPCS.

Residues 4–68 (DYYKILGIPS…KKRSLYDQYG (65 aa)) enclose the J domain.

The chain is DnaJ homolog subfamily B member 5 (Dnajb5) from Mus musculus (Mouse).